The chain runs to 197 residues: MQSPVINELIDAFKLLPTIGPKSAQRLAYFLLQNHQQDGHRLASAIESALEKVGYCQQCRNLSETEICGFCASKSRQTDQLCIVETPTDVVAIEQSGIYKGQYFVLMGHLSPIDGIGPDELGLPILRDRLAQGEIQELILATNPTVEGEATAHYIQQMAIEFNISVTRLAQGIPLGGELEYIDSGTLGQAFAGRKAV.

Residues Cys-56–Cys-71 form a C4-type zinc finger. The Toprim domain maps to Asp-79–Pro-174.

Belongs to the RecR family.

May play a role in DNA repair. It seems to be involved in an RecBC-independent recombinational process of DNA repair. It may act with RecF and RecO. This Hydrogenovibrio crunogenus (strain DSM 25203 / XCL-2) (Thiomicrospira crunogena) protein is Recombination protein RecR.